The following is a 278-amino-acid chain: Large ribosomal subunit protein uL24m (278 aa).

Positions 109–142 constitute a KOW domain; sequence FFPGDLVQVMVGKDKGRQGLVLTISRDSSEVVVD.

It belongs to the universal ribosomal protein uL24 family.

It is found in the mitochondrion. This Caenorhabditis briggsae protein is Large ribosomal subunit protein uL24m (mrpl-24).